Here is a 130-residue protein sequence, read N- to C-terminus: Translation initiation factor 5A (130 aa).

K36 carries the hypusine modification.

The protein belongs to the eIF-5A family.

It localises to the cytoplasm. In terms of biological role, functions by promoting the formation of the first peptide bond. The protein is Translation initiation factor 5A (eif5a) of Methanothermobacter thermautotrophicus (strain ATCC 29096 / DSM 1053 / JCM 10044 / NBRC 100330 / Delta H) (Methanobacterium thermoautotrophicum).